A 289-amino-acid polypeptide reads, in one-letter code: MGNQFKTLALLAALSGLLIAISYWVIGGSSGLMIGIGLAAVTNLLSWYQSDKIALAVYRAQAVSESQAPKLYRTVQRLSQRANIPMPGVYIVPGQTANAFATGRDPEHAAVAVTEGILNILPEDELEAVIAHELTHIINRDTLTQAVAATVAGAISFLAQMVSYSLWFGGIGGRDNERGGNPLGVLLTVVLAPIAATIIQLAISRTREFSADAGSARLTGNPRALARALQRLEATARQMPLNANPAFEPLLIINPISGQFLGNLFSSHPSTEARVQALLKLEKQLPTIA.

Transmembrane regions (helical) follow at residues 8–28 and 29–49; these read LALL…VIGG and SSGL…SWYQ. A Zn(2+)-binding site is contributed by His132. Glu133 is an active-site residue. His136 is a Zn(2+) binding site. 2 helical membrane-spanning segments follow: residues 151 to 171 and 183 to 203; these read VAGA…FGGI and LGVL…QLAI. Position 208 (Glu208) interacts with Zn(2+).

It belongs to the peptidase M48B family. Zn(2+) is required as a cofactor.

It localises to the cell inner membrane. In Nostoc sp. (strain PCC 7120 / SAG 25.82 / UTEX 2576), this protein is Protease HtpX homolog.